Consider the following 465-residue polypeptide: Gamma-aminobutyric acid receptor subunit rho-2 (465 aa).

A signal peptide spans 1–20 (MPYLMRLALVLFCLMALVES). Over 21–260 (RKPRRKRWTG…LYINFTLRRH (240 aa)) the chain is Extracellular. Arg-105 is a binding site for 4-aminobutanoate. N-linked (GlcNAc...) asparagine glycosylation occurs at Asn-120. Ser-169 lines the 4-aminobutanoate pocket. Cys-178 and Cys-192 are joined by a disulfide. Glu-197 contacts 4-aminobutanoate. The N-linked (GlcNAc...) asparagine glycan is linked to Asn-254. The chain crosses the membrane as a helical span at residues 261 to 281 (IFFFLLQTYFPATLMVMLSWV). The Cytoplasmic portion of the chain corresponds to 282 to 293 (SFWIDHRAVPAR). Residues 294 to 314 (VSLGIMTVLTMSTIITGVNAS) traverse the membrane as a helical segment. Topologically, residues 315-325 (MPRVSYIRAVD) are extracellular. Residues 326–346 (IYLWVSFVFVFLSVLEYAAVN) form a helical membrane-spanning segment. The Cytoplasmic portion of the chain corresponds to 347–443 (YLTTLQEQKE…IFQNTHAIDK (97 aa)). A helical transmembrane segment spans residues 444 to 464 (YSRLIFPAFYIVFNLIYWSVF). Position 465 (Ser-465) is a topological domain, extracellular.

Belongs to the ligand-gated ion channel (TC 1.A.9) family. Gamma-aminobutyric acid receptor (TC 1.A.9.5) subfamily. GABRR2 sub-subfamily. As to quaternary structure, three rho subunits (rho-1/GBRR1, rho-2/GBRR2 and rho-3/GBRR3) coassemble either to form functional homopentamers or heteropentamers. Rho-2 is unable to form a functional homopentamer. Interacts with SQSTM1. As to expression, expressed in the cerebellum.

The protein resides in the postsynaptic cell membrane. It is found in the cell membrane. It catalyses the reaction chloride(in) = chloride(out). Its function is as follows. Rho subunit of the pentameric ligand-gated chloride channels responsible for mediating the effects of gamma-aminobutyric acid (GABA), the major inhibitory neurotransmitter in the brain. Rho-containing GABA-gated chloride channels are a subclass of GABA(A) receptors (GABAARs) entirely composed of rho subunits, where GABA molecules bind at the rho intersubunit interfaces. When activated by GABA, rho-GABAARs selectively allow the flow of chloride anions across the cell membrane down their electrochemical gradient. Rho-2 GABAARs may contribute to the regulation of glial development in the cerebellum by controlling extrasynaptic transmission. Rho-2 GABAARs are also involved in neuronal tonic (extrasynaptic) and phasic (synaptic) transmission in the Purkinje neurons of the cerebellum. Rho-2 GABAARs expressed in retina may play a role in retinal neurotransmission. This is Gamma-aminobutyric acid receptor subunit rho-2 from Mus musculus (Mouse).